A 438-amino-acid polypeptide reads, in one-letter code: Drainin (438 aa).

A coiled-coil region spans residues 54 to 104 (PKSQEEVLKHQREYEEIQRKAKKTLEREAKEKEKLDAIRKEKERSLIDARK). Residues 133 to 374 (GLPPAVRGKI…RIWDLVFIEG (242 aa)) form the Rab-GAP TBC domain.

It localises to the contractile vacuole membrane. Its subcellular location is the cytoplasm. In terms of biological role, may act as a GTPase-activating protein for Rab family protein(s). Required for osmotic regulation by the contractile vacuole in hypo-osmotic environments. Essential for periodic fusion of the contractile vacuole with the plasma membrane and consequent expulsion of water from the cell body. This chain is Drainin (phgA), found in Dictyostelium discoideum (Social amoeba).